The chain runs to 252 residues: Imidazole glycerol phosphate synthase subunit HisF (252 aa).

Active-site residues include Asp-11 and Asp-130.

This sequence belongs to the HisA/HisF family. As to quaternary structure, heterodimer of HisH and HisF.

It localises to the cytoplasm. It carries out the reaction 5-[(5-phospho-1-deoxy-D-ribulos-1-ylimino)methylamino]-1-(5-phospho-beta-D-ribosyl)imidazole-4-carboxamide + L-glutamine = D-erythro-1-(imidazol-4-yl)glycerol 3-phosphate + 5-amino-1-(5-phospho-beta-D-ribosyl)imidazole-4-carboxamide + L-glutamate + H(+). It participates in amino-acid biosynthesis; L-histidine biosynthesis; L-histidine from 5-phospho-alpha-D-ribose 1-diphosphate: step 5/9. Functionally, IGPS catalyzes the conversion of PRFAR and glutamine to IGP, AICAR and glutamate. The HisF subunit catalyzes the cyclization activity that produces IGP and AICAR from PRFAR using the ammonia provided by the HisH subunit. The sequence is that of Imidazole glycerol phosphate synthase subunit HisF from Anoxybacillus flavithermus (strain DSM 21510 / WK1).